The primary structure comprises 437 residues: Trigger factor (437 aa).

In terms of domain architecture, PPIase FKBP-type spans 161-246 (GDRVNIDFKG…VNKVEGKALP (86 aa)).

It belongs to the FKBP-type PPIase family. Tig subfamily.

The protein localises to the cytoplasm. The enzyme catalyses [protein]-peptidylproline (omega=180) = [protein]-peptidylproline (omega=0). Functionally, involved in protein export. Acts as a chaperone by maintaining the newly synthesized protein in an open conformation. Functions as a peptidyl-prolyl cis-trans isomerase. In Alcanivorax borkumensis (strain ATCC 700651 / DSM 11573 / NCIMB 13689 / SK2), this protein is Trigger factor.